Reading from the N-terminus, the 1623-residue chain is RING finger protein 17 (1623 aa).

Residues 1 to 22 (MAAEASKTGPSRSSYQRMGRKS) form a disordered region. The RING-type zinc finger occupies 32 to 75 (CTRCGRRVSRSSGHHCELQCGHAFCELCLLMTEECTTIICPDCE). Lysine 234 is modified (N6-acetyllysine). Tudor domains lie at 726 to 784 (CPVQ…FLNA), 962 to 1021 (KWEN…LKTM), and 1228 to 1285 (FWKK…PDIP). Residues 1438-1462 (NQSNQHSDTDDSGVSGESESESLDE) form a disordered region. The Tudor 4 domain maps to 1479–1539 (DFRTEMPCLA…CQIPSHLMRY (61 aa)).

In terms of assembly, interacts with MXD1, MXD3, MXD4, MXI1 and PIWIL1. Self-associates. In terms of tissue distribution, testis specific.

It localises to the cytoplasm. It is found in the nucleus. In terms of biological role, seems to be involved in regulation of transcriptional activity of MYC. In vitro, inhibits DNA-binding activity of Mad-MAX heterodimers. Can recruit Mad transcriptional repressors (MXD1, MXD3, MXD4 and MXI1) to the cytoplasm. May be involved in spermiogenesis. This is RING finger protein 17 (RNF17) from Homo sapiens (Human).